The chain runs to 406 residues: Cysteine desulfurase (406 aa).

At Lys-226 the chain carries N6-(pyridoxal phosphate)lysine. The active-site Cysteine persulfide intermediate is the Cys-364.

It belongs to the class-V pyridoxal-phosphate-dependent aminotransferase family. Csd subfamily. As to quaternary structure, homodimer. Interacts with SufE and the SufBCD complex composed of SufB, SufC and SufD. The interaction with SufE is required to mediate the direct transfer of the sulfur atom from the S-sulfanylcysteine. Pyridoxal 5'-phosphate is required as a cofactor.

The protein localises to the cytoplasm. It catalyses the reaction (sulfur carrier)-H + L-cysteine = (sulfur carrier)-SH + L-alanine. The catalysed reaction is L-selenocysteine + AH2 = hydrogenselenide + L-alanine + A + H(+). It participates in cofactor biosynthesis; iron-sulfur cluster biosynthesis. Its function is as follows. Cysteine desulfurases mobilize the sulfur from L-cysteine to yield L-alanine, an essential step in sulfur metabolism for biosynthesis of a variety of sulfur-containing biomolecules. Component of the suf operon, which is activated and required under specific conditions such as oxidative stress and iron limitation. Acts as a potent selenocysteine lyase in vitro, that mobilizes selenium from L-selenocysteine. Selenocysteine lyase activity is however unsure in vivo. The polypeptide is Cysteine desulfurase (Salmonella heidelberg (strain SL476)).